The sequence spans 366 residues: Galactoside alpha-(1,2)-fucosyltransferase 1 (366 aa).

At methionine 1–glutamine 8 the chain is on the cytoplasmic side. The helical; Signal-anchor for type II membrane protein transmembrane segment at leucine 9–phenylalanine 25 threads the bilayer. Residues leucine 26–proline 366 lie on the Lumenal side of the membrane. N-linked (GlcNAc...) asparagine glycosylation is found at asparagine 66, asparagine 302, and asparagine 328.

This sequence belongs to the glycosyltransferase 11 family.

It localises to the golgi apparatus. Its subcellular location is the golgi stack membrane. It catalyses the reaction a beta-D-galactosyl-(1-&gt;4)-N-acetyl-beta-D-glucosaminyl derivative + GDP-beta-L-fucose = an alpha-L-Fuc-(1-&gt;2)-beta-D-Gal-(1-&gt;4)-beta-D-GlcNAc derivative + GDP + H(+). The enzyme catalyses a ganglioside GA1 + GDP-beta-L-fucose = a ganglioside Fuc-GA1 + GDP + H(+). It carries out the reaction a beta-D-Gal-(1-&gt;3)-beta-D-GlcNAc-(1-&gt;3)-beta-D-Gal-(1-&gt;4)-beta-D-Glc-(1&lt;-&gt;1')-Cer(d18:1(4E)) + GDP-beta-L-fucose = alpha-L-fucosyl-(1-&gt;2)- beta-D-galactosyl-(1-&gt;3)-N-acetyl-beta-D-glucosaminyl-(1-&gt;3)-beta-D-galactosyl-(1-&gt;4)-beta-D-glucosyl-(1&lt;-&gt;1')-N-acylsphing-4-enine + GDP + H(+). The catalysed reaction is a neolactoside nLc4Cer(d18:1(4E)) + GDP-beta-L-fucose = a neolactoside IV(2)-alpha-Fuc-nLc4Cer(d18:1(4E)) + GDP + H(+). It catalyses the reaction a ganglioside GM1 + GDP-beta-L-fucose = a ganglioside Fuc-GM1 + GDP + H(+). The enzyme catalyses beta-D-galactosyl-(1-&gt;3)-N-acetyl-D-galactosamine + GDP-beta-L-fucose = alpha-L-fucosyl-(1-&gt;2)-beta-D-galactosyl-(1-&gt;3)-N-acetyl-D-galactosamine + GDP + H(+). Its pathway is protein modification; protein glycosylation. Catalyzes the transfer of L-fucose, from a guanosine diphosphate-beta-L-fucose, to the terminal galactose residue of glycoconjugates through an alpha(1,2) linkage leading to H antigen synthesis that is an intermediate substrate in the synthesis of ABO blood group antigens. H antigen is essential for maturation of the glomerular layer of the main olfactory bulb, in cell migration and early cell-cell contacts during tumor associated angiogenesis. Preferentially fucosylates soluble lactose and to a lesser extent fucosylates glycolipids gangliosides GA1 and GM1a. The protein is Galactoside alpha-(1,2)-fucosyltransferase 1 of Gorilla gorilla gorilla (Western lowland gorilla).